A 151-amino-acid chain; its full sequence is Transcriptional regulator MraZ (151 aa).

2 SpoVT-AbrB domains span residues 5–52 and 81–124; these read ANAV…PLDE and AVDL…DEDA.

This sequence belongs to the MraZ family. In terms of assembly, forms oligomers.

The protein resides in the cytoplasm. It is found in the nucleoid. This Pseudomonas putida (strain ATCC 700007 / DSM 6899 / JCM 31910 / BCRC 17059 / LMG 24140 / F1) protein is Transcriptional regulator MraZ.